The primary structure comprises 96 residues: Large ribosomal subunit protein bL27 (96 aa).

A propeptide spanning residues 1 to 9 (MLKFDIQHF) is cleaved from the precursor. Residues 1-33 (MLKFDIQHFAHKKGGGSTSNGRDSESKRLGAKR) form a disordered region. Residues 22-33 (RDSESKRLGAKR) show a composition bias toward basic and acidic residues.

It belongs to the bacterial ribosomal protein bL27 family. In terms of processing, the N-terminus is cleaved by ribosomal processing cysteine protease Prp.

This Listeria innocua serovar 6a (strain ATCC BAA-680 / CLIP 11262) protein is Large ribosomal subunit protein bL27.